We begin with the raw amino-acid sequence, 269 residues long: Phosphonates import ATP-binding protein PhnC (269 aa).

The region spanning 2–245 (LVVEGLTCRF…VARELYDLEA (244 aa)) is the ABC transporter domain. 34–41 (GRSGAGKS) is a binding site for ATP.

Belongs to the ABC transporter superfamily. Phosphonates importer (TC 3.A.1.9.1) family. As to quaternary structure, the complex is composed of two ATP-binding proteins (PhnC), two transmembrane proteins (PhnE) and a solute-binding protein (PhnD).

It localises to the cell inner membrane. It catalyses the reaction phosphonate(out) + ATP + H2O = phosphonate(in) + ADP + phosphate + H(+). Its function is as follows. Part of the ABC transporter complex PhnCDE involved in phosphonates import. Responsible for energy coupling to the transport system. In Bradyrhizobium diazoefficiens (strain JCM 10833 / BCRC 13528 / IAM 13628 / NBRC 14792 / USDA 110), this protein is Phosphonates import ATP-binding protein PhnC.